The primary structure comprises 287 residues: N-acetylmannosamine kinase (287 aa).

ATP is bound by residues 5–12 (AIDIGGTK) and 131–138 (GVGGGIII). Residues His-155, Cys-165, Cys-167, and Cys-172 each coordinate Zn(2+).

Belongs to the ROK (NagC/XylR) family. NanK subfamily. As to quaternary structure, homodimer.

It carries out the reaction an N-acyl-D-mannosamine + ATP = an N-acyl-D-mannosamine 6-phosphate + ADP + H(+). The protein operates within amino-sugar metabolism; N-acetylneuraminate degradation; D-fructose 6-phosphate from N-acetylneuraminate: step 2/5. Functionally, catalyzes the phosphorylation of N-acetylmannosamine (ManNAc) to ManNAc-6-P. The protein is N-acetylmannosamine kinase of Vibrio cholerae serotype O1 (strain ATCC 39541 / Classical Ogawa 395 / O395).